Here is a 360-residue protein sequence, read N- to C-terminus: Phosphoserine aminotransferase (360 aa).

L-glutamate is bound at residue Arg42. Pyridoxal 5'-phosphate contacts are provided by residues 76–77 (AS), Trp102, Thr152, Asp172, and Gln195. Position 196 is an N6-(pyridoxal phosphate)lysine (Lys196). 237-238 (NT) serves as a coordination point for pyridoxal 5'-phosphate.

Belongs to the class-V pyridoxal-phosphate-dependent aminotransferase family. SerC subfamily. Homodimer. Pyridoxal 5'-phosphate serves as cofactor.

It is found in the cytoplasm. It carries out the reaction O-phospho-L-serine + 2-oxoglutarate = 3-phosphooxypyruvate + L-glutamate. It catalyses the reaction 4-(phosphooxy)-L-threonine + 2-oxoglutarate = (R)-3-hydroxy-2-oxo-4-phosphooxybutanoate + L-glutamate. The protein operates within amino-acid biosynthesis; L-serine biosynthesis; L-serine from 3-phospho-D-glycerate: step 2/3. Its function is as follows. Catalyzes the reversible conversion of 3-phosphohydroxypyruvate to phosphoserine and of 3-hydroxy-2-oxo-4-phosphonooxybutanoate to phosphohydroxythreonine. The chain is Phosphoserine aminotransferase from Bacillus cereus (strain ATCC 14579 / DSM 31 / CCUG 7414 / JCM 2152 / NBRC 15305 / NCIMB 9373 / NCTC 2599 / NRRL B-3711).